The chain runs to 171 residues: uncharacterized protein (171 aa).

Residues 1 to 20 (MRRVLFSCFCGLLWSSSGWA) form the signal peptide. Cysteines 40 and 80 form a disulfide.

It belongs to the fimbrial protein family.

The protein resides in the fimbrium. In terms of biological role, part of the sfmACDHF fimbrial operon. Could contribute to adhesion to various surfaces in specific environmental niches. Increases adhesion to eukaryotic T24 bladder epithelial cells in the absence of fim genes. This is an uncharacterized protein from Escherichia coli (strain K12).